The following is a 395-amino-acid chain: Carbohydrate sulfotransferase 6 (395 aa).

At 1 to 5 (MWLPR) the chain is on the cytoplasmic side. Residues 6–26 (VSSTAVTALLLAQTFLLLFLV) traverse the membrane as a helical; Signal-anchor for type II membrane protein segment. At 27–395 (SRPGPSSPAG…ASSTASHPRN (369 aa)) the chain is on the lumenal side. Position 49-55 (49-55 (WRSGSSF)) interacts with 3'-phosphoadenylyl sulfate. Asparagine 116 carries N-linked (GlcNAc...) asparagine glycosylation. 202-210 (RDPRAVLRS) is a 3'-phosphoadenylyl sulfate binding site. N-linked (GlcNAc...) asparagine glycosylation is found at asparagine 229, asparagine 305, and asparagine 328.

It belongs to the sulfotransferase 1 family. Gal/GlcNAc/GalNAc subfamily. Expressed in cornea. Mainly expressed in brain. Also expressed in spinal cord and trachea.

The protein resides in the golgi apparatus membrane. It catalyses the reaction 3'-phosphoadenylyl sulfate + keratan = adenosine 3',5'-bisphosphate + keratan 6'-sulfate.. Its function is as follows. Sulfotransferase that utilizes 3'-phospho-5'-adenylyl sulfate (PAPS) as sulfonate donor to catalyze the transfer of sulfate to position 6 of non-reducing N-acetylglucosamine (GlcNAc) residues of keratan. Cooperates with B4GALT4 galactosyltransferase and B3GNT7 N-acetylglucosaminyltransferase to construct and elongate the sulfated disaccharide unit [-&gt;3Galbeta1-&gt;4(6-sulfoGlcNAcbeta)1-&gt;] within keratan sulfate polymer. Involved in biosynthesis of keratan sulfate in cornea, with an impact on proteoglycan fibril organization and corneal transparency. Involved in sulfation of endothelial mucins such as GLYCAM1. The chain is Carbohydrate sulfotransferase 6 from Homo sapiens (Human).